The sequence spans 71 residues: Alpha-elapitoxin-Nn3a (71 aa).

Intrachain disulfides connect cysteine 3-cysteine 20, cysteine 14-cysteine 42, cysteine 26-cysteine 30, cysteine 46-cysteine 56, and cysteine 57-cysteine 62.

This sequence belongs to the three-finger toxin family. Long-chain subfamily. Type II alpha-neurotoxin sub-subfamily. In terms of tissue distribution, expressed by the venom gland.

It is found in the secreted. Nicotinic acetylcholine receptor antagonist. Binds to muscle nicotinic acetylcholine receptor (nAChR) and inhibits acetylcholine from binding to the receptor, thereby impairing neuromuscular transmission. Produces peripheral paralysis by blocking neuromuscular transmission at the postsynaptic site. Induces concentration-dependent inhibition of indirect twitches and abolishes contractile responses of tissues to exogenous acetylcholine and carbachol, in the chick biventer cervicis nerve-muscle preparation at 100-300 nM (in vitro). Prior incubation of tissues with Indian polyvalent antivenom (1 ml/0.6 mg) prevents the neurotoxic effects at 100 nM (in vitro). Addition of Indian polyvalent antivenom (1 ml/0.6 mg) at the t90 time point partially restores the neurotoxic effects (in vitro). Displays a reversible antagonism of concentration-response curves to carbachol, with a pA2 of 8.17 (in vitro). The polypeptide is Alpha-elapitoxin-Nn3a (Naja naja (Indian cobra)).